A 255-amino-acid chain; its full sequence is 2-dehydro-3,6-dideoxy-6-sulfogluconate aldolase (255 aa).

The active-site Proton acceptor is the His38. Glu141 and Asp167 together coordinate a divalent metal cation.

The protein belongs to the HpcH/HpaI aldolase family. In terms of assembly, homohexamer; trimer of dimers. It depends on a divalent metal cation as a cofactor.

It catalyses the reaction 2-dehydro-3,6-dideoxy-6-sulfo-D-gluconate = (2S)-3-sulfolactaldehyde + pyruvate. Functionally, catalyzes the retro-aldol cleavage of 2-dehydro-3,6-dideoxy-6-sulfo-D-gluconate to (2S)-3-sulfolactaldehyde and pyruvate. Is involved in a degradation pathway of sulfoquinovose (SQ) that allows P.putida SQ1 to use SQ as the sole carbon and energy source for growth. This Pseudomonas putida (Arthrobacter siderocapsulatus) protein is 2-dehydro-3,6-dideoxy-6-sulfogluconate aldolase.